The sequence spans 454 residues: Bifunctional protein GlmU (454 aa).

The pyrophosphorylase stretch occupies residues 1–226; sequence MALNVVILAA…AIEVEGANNR (226 aa). Residues 8–11, lysine 22, glutamine 73, 78–79, 100–102, glycine 137, glutamate 151, asparagine 166, and asparagine 224 each bind UDP-N-acetyl-alpha-D-glucosamine; these read LAAG, GT, and YGD. Mg(2+) is bound at residue aspartate 102. Asparagine 224 lines the Mg(2+) pocket. Residues 227–247 are linker; the sequence is VQLAQLERAYQARAAEKLMLE. The N-acetyltransferase stretch occupies residues 248 to 454; sequence GANLRDPARI…GWPRPVKLKK (207 aa). Residues arginine 330 and lysine 348 each coordinate UDP-N-acetyl-alpha-D-glucosamine. Residue histidine 360 is the Proton acceptor of the active site. Residues tyrosine 363 and asparagine 374 each coordinate UDP-N-acetyl-alpha-D-glucosamine. Acetyl-CoA is bound by residues alanine 377, 383–384, serine 402, alanine 420, and arginine 437; that span reads NY.

It in the N-terminal section; belongs to the N-acetylglucosamine-1-phosphate uridyltransferase family. This sequence in the C-terminal section; belongs to the transferase hexapeptide repeat family. Homotrimer. Requires Mg(2+) as cofactor.

It is found in the cytoplasm. The enzyme catalyses alpha-D-glucosamine 1-phosphate + acetyl-CoA = N-acetyl-alpha-D-glucosamine 1-phosphate + CoA + H(+). It carries out the reaction N-acetyl-alpha-D-glucosamine 1-phosphate + UTP + H(+) = UDP-N-acetyl-alpha-D-glucosamine + diphosphate. It functions in the pathway nucleotide-sugar biosynthesis; UDP-N-acetyl-alpha-D-glucosamine biosynthesis; N-acetyl-alpha-D-glucosamine 1-phosphate from alpha-D-glucosamine 6-phosphate (route II): step 2/2. Its pathway is nucleotide-sugar biosynthesis; UDP-N-acetyl-alpha-D-glucosamine biosynthesis; UDP-N-acetyl-alpha-D-glucosamine from N-acetyl-alpha-D-glucosamine 1-phosphate: step 1/1. It participates in bacterial outer membrane biogenesis; LPS lipid A biosynthesis. Its function is as follows. Catalyzes the last two sequential reactions in the de novo biosynthetic pathway for UDP-N-acetylglucosamine (UDP-GlcNAc). The C-terminal domain catalyzes the transfer of acetyl group from acetyl coenzyme A to glucosamine-1-phosphate (GlcN-1-P) to produce N-acetylglucosamine-1-phosphate (GlcNAc-1-P), which is converted into UDP-GlcNAc by the transfer of uridine 5-monophosphate (from uridine 5-triphosphate), a reaction catalyzed by the N-terminal domain. The protein is Bifunctional protein GlmU of Shewanella woodyi (strain ATCC 51908 / MS32).